The chain runs to 109 residues: Putative pterin-4-alpha-carbinolamine dehydratase (109 aa).

This sequence belongs to the pterin-4-alpha-carbinolamine dehydratase family.

It carries out the reaction (4aS,6R)-4a-hydroxy-L-erythro-5,6,7,8-tetrahydrobiopterin = (6R)-L-erythro-6,7-dihydrobiopterin + H2O. This chain is Putative pterin-4-alpha-carbinolamine dehydratase, found in Halorhodospira halophila (strain DSM 244 / SL1) (Ectothiorhodospira halophila (strain DSM 244 / SL1)).